A 495-amino-acid polypeptide reads, in one-letter code: NADH-ubiquinone oxidoreductase chain 4 (495 aa).

A run of 15 helical transmembrane segments spans residues 9-29 (YFDLSGLILCPVLGSIILLFI), 39-59 (LIGLCVSLITFLYSLVLWIQF), 89-109 (LSLFFVILTTFLIPICILVGW), 118-138 (EYIIAFLICEFLMIAVFCMLD), 139-159 (LLLFYVFFESVLIPMFIIIGV), 173-193 (FFLYTLLGSVFMLLAILLILL), 214-234 (ILLWIAFFASFAVKVPMVPVH), 245-265 (PTAGSVILAGILLKLGTYGFL), 272-292 (FPEATLCFTPFIYTLSAIAII), 313-333 (VAHMNLVTIGMFSLNIQGIGG), 335-355 (ILLMLSHGLVSSALFLCVGVL), 367-387 (YGGLVSTMPNFSTIFFFFTLA), 388-408 (NMSLPGTSSFIGEFLILVGAF), 413-433 (LVATLRALGMILGAAYSLWLY), and 457-477 (VFIFLPFLVGVVWMGVYPKVF).

This sequence belongs to the complex I subunit 4 family.

The protein resides in the mitochondrion membrane. It carries out the reaction a ubiquinone + NADH + 5 H(+)(in) = a ubiquinol + NAD(+) + 4 H(+)(out). Functionally, core subunit of the mitochondrial membrane respiratory chain NADH dehydrogenase (Complex I) that is believed to belong to the minimal assembly required for catalysis. Complex I functions in the transfer of electrons from NADH to the respiratory chain. The immediate electron acceptor for the enzyme is believed to be ubiquinone. This Triticum aestivum (Wheat) protein is NADH-ubiquinone oxidoreductase chain 4 (ND4).